The following is a 541-amino-acid chain: Capsid protein VP1 (541 aa).

The shell domain stretch occupies residues 1 to 224; it reads MRMSDGAAPK…FVYLTPPIER (224 aa). A P1 sub-domain 1 region spans residues 225–277; the sequence is TIYRMVDLPVIQPRLCTHARWPAPVYGLLVDPSLPSNPQWQNGRVHVDGTLLG. Positions 225–541 are protruding domain; sequence TIYRMVDLPV…SLATGRMLKQ (317 aa). The P2 sub-domain stretch occupies residues 278–416; it reads TTPISGSWVS…EYNDGLLVPL (139 aa). Residues 298–366 form an interaction with host receptor CD300LF region; sequence QSGTGEVATF…MILGPTTNAD (69 aa). The P1 sub-domain 2 stretch occupies residues 417–541; sequence APPIGPFLPG…SLATGRMLKQ (125 aa).

This sequence belongs to the caliciviridae capsid protein family. Homodimer. Homomultimer. Interacts with the minor capsid protein VP2. Interacts (via P2 subdomain) with host receptor CD300LF (via N-terminus); this interaction requires Mg(2+) and Ca(2+), and allows viral binding and entry into the host cell. Stochioimetry is 2:2. Bile acids interact with the P domain dimer interface and act as cofactors enhancing virus binding and infectivity. Interacts with host receptor CD300LD; this interaction allows viral binding and entry into the host cell.

It is found in the virion. The protein resides in the host cytoplasm. Capsid protein self assembles to form an icosahedral capsid with a T=3 symmetry, about 38 nm in diameter, and consisting of 180 capsid proteins. A smaller form of capsid with a diameter of 23 nm might be capsid proteins assembled as icosahedron with T=1 symmetry. The capsid encapsulates the genomic RNA and is decorated with VP2 proteins. Mediates virion attachment to the host cell receptor CD300LF. The chain is Capsid protein VP1 from Norovirus (isolate Mouse/NoV/United States/MNV1/2002/GV) (MNV-1).